The primary structure comprises 387 residues: Carboxynorspermidine/carboxyspermidine decarboxylase (387 aa).

N6-(pyridoxal phosphate)lysine is present on K51. E248 and D284 together coordinate substrate.

The protein belongs to the Orn/Lys/Arg decarboxylase class-II family. NspC subfamily. As to quaternary structure, homodimer. Pyridoxal 5'-phosphate serves as cofactor.

It is found in the cytoplasm. The enzyme catalyses carboxynorspermidine + H(+) = norspermidine + CO2. It catalyses the reaction carboxyspermidine + H(+) = spermidine + CO2. In terms of biological role, catalyzes the decarboxylation of carboxynorspermidine and carboxyspermidine. Essential for biofilm formation. This chain is Carboxynorspermidine/carboxyspermidine decarboxylase, found in Vibrio cholerae serotype O1 (strain ATCC 39315 / El Tor Inaba N16961).